The following is a 199-amino-acid chain: Recombination protein RecR (199 aa).

A C4-type zinc finger spans residues Cys57–Cys72. The Toprim domain occupies Ser80 to Ser176.

The protein belongs to the RecR family.

Functionally, may play a role in DNA repair. It seems to be involved in an RecBC-independent recombinational process of DNA repair. It may act with RecF and RecO. This chain is Recombination protein RecR, found in Limosilactobacillus fermentum (strain NBRC 3956 / LMG 18251) (Lactobacillus fermentum).